The primary structure comprises 251 residues: Probable transcriptional regulatory protein Francci3_1368 (251 aa).

The protein belongs to the TACO1 family.

The protein localises to the cytoplasm. The sequence is that of Probable transcriptional regulatory protein Francci3_1368 from Frankia casuarinae (strain DSM 45818 / CECT 9043 / HFP020203 / CcI3).